A 157-amino-acid chain; its full sequence is 6,7-dimethyl-8-ribityllumazine synthase 1 (157 aa).

5-amino-6-(D-ribitylamino)uracil-binding positions include phenylalanine 22, 53–55, and 82–84; these read ALE and TVI. Residue 87-88 coordinates (2S)-2-hydroxy-3-oxobutyl phosphate; the sequence is ET. Histidine 90 serves as the catalytic Proton donor. Asparagine 115 contributes to the 5-amino-6-(D-ribitylamino)uracil binding site. Arginine 129 is a binding site for (2S)-2-hydroxy-3-oxobutyl phosphate.

This sequence belongs to the DMRL synthase family. As to quaternary structure, homopentamer.

The enzyme catalyses (2S)-2-hydroxy-3-oxobutyl phosphate + 5-amino-6-(D-ribitylamino)uracil = 6,7-dimethyl-8-(1-D-ribityl)lumazine + phosphate + 2 H2O + H(+). It participates in cofactor biosynthesis; riboflavin biosynthesis; riboflavin from 2-hydroxy-3-oxobutyl phosphate and 5-amino-6-(D-ribitylamino)uracil: step 1/2. Functionally, catalyzes the formation of 6,7-dimethyl-8-ribityllumazine by condensation of 5-amino-6-(D-ribitylamino)uracil with 3,4-dihydroxy-2-butanone 4-phosphate. This is the penultimate step in the biosynthesis of riboflavin. This Brucella melitensis biotype 1 (strain ATCC 23456 / CCUG 17765 / NCTC 10094 / 16M) protein is 6,7-dimethyl-8-ribityllumazine synthase 1 (ribH1).